The primary structure comprises 309 residues: Porphobilinogen deaminase (309 aa).

Cys244 carries the post-translational modification S-(dipyrrolylmethanemethyl)cysteine.

This sequence belongs to the HMBS family. In terms of assembly, monomer. Dipyrromethane is required as a cofactor.

It catalyses the reaction 4 porphobilinogen + H2O = hydroxymethylbilane + 4 NH4(+). Its pathway is porphyrin-containing compound metabolism; protoporphyrin-IX biosynthesis; coproporphyrinogen-III from 5-aminolevulinate: step 2/4. Functionally, tetrapolymerization of the monopyrrole PBG into the hydroxymethylbilane pre-uroporphyrinogen in several discrete steps. The polypeptide is Porphobilinogen deaminase (Listeria welshimeri serovar 6b (strain ATCC 35897 / DSM 20650 / CCUG 15529 / CIP 8149 / NCTC 11857 / SLCC 5334 / V8)).